Consider the following 470-residue polypeptide: MTGKEKKLWGGRFQEKPSSILERIGESVSFDHKLYKEDIQGSIAHARMLKQIGILSGDELSKIETSLLQIKTELEEGKLEFKSELEDIHMHIESRLTELIGETGKKLHTARSRNDQVTQDVRLYILGRGKEILKSIVSLRFSLYEKAKRSVDVIIPGYTHLQVAQPIRASQYLLSWFWALERDQEFFRFALKASDELALGGGAMAGVNYATDREFLKKELGLSKVSPNSMDGVSSRDHILEFLFACTQLMIHASRICEDIILYSSQEFGILKLSDSLTTGSSIMPQKKNPDIAELIRGKAGRVIGNLNHLLVMLKGLPSTYNRDLQEDKLALFDSVETVEISLEGIREMIEDWVWVPERAESSLKNGFATATDLADFLVYEKKVPFRTAHELVGTLVRVCVEQKRTLFDLPEPDRIAVSEHFVGKEYENAVSLSLSADKKISYGGTSKKRQEEQLKIALESLKQTETLFL.

This sequence belongs to the lyase 1 family. Argininosuccinate lyase subfamily.

The protein localises to the cytoplasm. The enzyme catalyses 2-(N(omega)-L-arginino)succinate = fumarate + L-arginine. It functions in the pathway amino-acid biosynthesis; L-arginine biosynthesis; L-arginine from L-ornithine and carbamoyl phosphate: step 3/3. The protein is Argininosuccinate lyase of Leptospira borgpetersenii serovar Hardjo-bovis (strain L550).